The sequence spans 434 residues: Methylenetetrahydrofolate--tRNA-(uracil-5-)-methyltransferase TrmFO (434 aa).

10–15 provides a ligand contact to FAD; the sequence is GAGLAG.

The protein belongs to the MnmG family. TrmFO subfamily. Requires FAD as cofactor.

The protein resides in the cytoplasm. It catalyses the reaction uridine(54) in tRNA + (6R)-5,10-methylene-5,6,7,8-tetrahydrofolate + NADH + H(+) = 5-methyluridine(54) in tRNA + (6S)-5,6,7,8-tetrahydrofolate + NAD(+). The enzyme catalyses uridine(54) in tRNA + (6R)-5,10-methylene-5,6,7,8-tetrahydrofolate + NADPH + H(+) = 5-methyluridine(54) in tRNA + (6S)-5,6,7,8-tetrahydrofolate + NADP(+). Functionally, catalyzes the folate-dependent formation of 5-methyl-uridine at position 54 (M-5-U54) in all tRNAs. The sequence is that of Methylenetetrahydrofolate--tRNA-(uracil-5-)-methyltransferase TrmFO from Bacillus cereus (strain AH820).